A 486-amino-acid polypeptide reads, in one-letter code: ATP-dependent rRNA helicase RRP3 (486 aa).

The tract at residues 1-58 (MNGAKRRKVAQDTPRNTKPVAQEKPARAEPKPSSDEESEEESATLEEPSAEETAVDAP) is disordered. The segment covering 24–34 (KPARAEPKPSS) has biased composition (basic and acidic residues). Over residues 35–54 (DEESEEESATLEEPSAEETA) the composition is skewed to acidic residues. The Q motif signature appears at 60–88 (KTFKDLGVNDALCEACEKLNYKYPTPIQE). Positions 91 to 262 (IPVALQGRDI…RASLRDPVKV (172 aa)) constitute a Helicase ATP-binding domain. 104-111 (AETGSGKT) lines the ATP pocket. The DEAD box motif lies at 210-213 (DEAD). The Helicase C-terminal domain occupies 286-434 (QKDVHLIYLI…EYPTEKEEVM (149 aa)). 2 stretches are compositionally biased toward basic and acidic residues: residues 451 to 460 (MKSFTEERGK) and 476 to 486 (RGRDDMDREEG). The tract at residues 451 to 486 (MKSFTEERGKKGSTLKGGRGKKGGKRGRDDMDREEG) is disordered.

This sequence belongs to the DEAD box helicase family. DDX47/RRP3 subfamily. As to quaternary structure, interacts with the SSU processome.

The protein resides in the nucleus. The enzyme catalyses ATP + H2O = ADP + phosphate + H(+). Its function is as follows. ATP-dependent rRNA helicase required for pre-ribosomal RNA processing. Involved in the maturation of the 35S-pre-rRNA and to its cleavage to mature 18S rRNA. In Gibberella zeae (strain ATCC MYA-4620 / CBS 123657 / FGSC 9075 / NRRL 31084 / PH-1) (Wheat head blight fungus), this protein is ATP-dependent rRNA helicase RRP3.